A 135-amino-acid polypeptide reads, in one-letter code: S-protein homolog 20 (135 aa).

Positions 1 to 26 (MNGSSAFHIILSVTFMVFLFGGLCEA) are cleaved as a signal peptide. A glycan (N-linked (GlcNAc...) asparagine) is linked at Asn-88.

It belongs to the plant self-incompatibility (S1) protein family.

The protein resides in the secreted. The polypeptide is S-protein homolog 20 (Arabidopsis thaliana (Mouse-ear cress)).